We begin with the raw amino-acid sequence, 158 residues long: NAD(P)H-quinone oxidoreductase subunit J, chloroplastic (158 aa).

This sequence belongs to the complex I 30 kDa subunit family. NDH is composed of at least 16 different subunits, 5 of which are encoded in the nucleus.

The protein resides in the plastid. It is found in the chloroplast thylakoid membrane. It catalyses the reaction a plastoquinone + NADH + (n+1) H(+)(in) = a plastoquinol + NAD(+) + n H(+)(out). The enzyme catalyses a plastoquinone + NADPH + (n+1) H(+)(in) = a plastoquinol + NADP(+) + n H(+)(out). NDH shuttles electrons from NAD(P)H:plastoquinone, via FMN and iron-sulfur (Fe-S) centers, to quinones in the photosynthetic chain and possibly in a chloroplast respiratory chain. The immediate electron acceptor for the enzyme in this species is believed to be plastoquinone. Couples the redox reaction to proton translocation, and thus conserves the redox energy in a proton gradient. The chain is NAD(P)H-quinone oxidoreductase subunit J, chloroplastic from Chloranthus spicatus (Chulantree).